The chain runs to 205 residues: Small ribosomal subunit protein uS4 (205 aa).

Residues 93–171 (SRVSSVLYRS…SPHYLEVDRE (79 aa)) form the S4 RNA-binding domain.

The protein belongs to the universal ribosomal protein uS4 family. Part of the 30S ribosomal subunit. Contacts protein S5. The interaction surface between S4 and S5 is involved in control of translational fidelity.

Its function is as follows. One of the primary rRNA binding proteins, it binds directly to 16S rRNA where it nucleates assembly of the body of the 30S subunit. Functionally, with S5 and S12 plays an important role in translational accuracy. This Neorickettsia sennetsu (strain ATCC VR-367 / Miyayama) (Ehrlichia sennetsu) protein is Small ribosomal subunit protein uS4.